The primary structure comprises 78 residues: Large ribosomal subunit protein bL28 (78 aa).

This sequence belongs to the bacterial ribosomal protein bL28 family.

In Acidithiobacillus ferrooxidans (strain ATCC 23270 / DSM 14882 / CIP 104768 / NCIMB 8455) (Ferrobacillus ferrooxidans (strain ATCC 23270)), this protein is Large ribosomal subunit protein bL28.